Here is a 1362-residue protein sequence, read N- to C-terminus: DNA-directed RNA polymerase subunit beta (1362 aa).

The protein belongs to the RNA polymerase beta chain family. In terms of assembly, the RNAP catalytic core consists of 2 alpha, 1 beta, 1 beta' and 1 omega subunit. When a sigma factor is associated with the core the holoenzyme is formed, which can initiate transcription.

The enzyme catalyses RNA(n) + a ribonucleoside 5'-triphosphate = RNA(n+1) + diphosphate. Functionally, DNA-dependent RNA polymerase catalyzes the transcription of DNA into RNA using the four ribonucleoside triphosphates as substrates. The polypeptide is DNA-directed RNA polymerase subunit beta (Parvibaculum lavamentivorans (strain DS-1 / DSM 13023 / NCIMB 13966)).